Here is a 40-residue protein sequence, read N- to C-terminus: Protamine-2 (40 aa).

The interval 1 to 40 (MPPRRKRVSSAPRRRRRTYRRTTAHKHQERPVHRRRRRRH) is disordered.

As to expression, testis.

It localises to the nucleus. It is found in the chromosome. Functionally, protamines substitute for histones in the chromatin of sperm during the haploid phase of spermatogenesis. They compact sperm DNA into a highly condensed, stable and inactive complex. This is Protamine-2 (PBP2) from Bufo japonicus (Japanese common toad).